A 271-amino-acid chain; its full sequence is Short chain dehydrogenase virK (271 aa).

NADP(+) is bound by residues L13, D59, N87, Y168, K172, V201, and T203. Y168 acts as the Proton donor in catalysis. K172 acts as the Lowers pKa of active site Tyr in catalysis.

Belongs to the short-chain dehydrogenases/reductases (SDR) family.

It functions in the pathway secondary metabolite biosynthesis. In terms of biological role, short chain dehydrogenase; part of the gene cluster that mediates the biosynthesis of virensols and trichoxide, fungal natural products that contain or are derived from a salicylaldehyde core. The pathway begins with the synthesis of the reduced chain in virensol C by the highly reducing polyketide synthase virA via condensation of one acetate and 8 malonate units. VirA has interesting programming rules since the first 2 ketides are fully reduced, the 3 following ketides undergo beta-dehydration, and the last 3 ketides are only reduced to beta-hydroxys to yield the trihydroxy portion. The production of aldehyde virensol C by virA alone is surprising, since virA does not contain a reductase (R) domain that is typically associated with reductive product release in HRPKS. The cupin-domain enzyme virC is involved in enhancing virA product turnover. The short-chain dehydrogenase virB then oxidizes the C-7 alcohol of virensol C to a ketone, yielding virensol D. Virensol D is further transformed to salicylaldehyde 5-deoxyaurocitrin by the short-chain dehydrogenase virD. VirD catalyzes the dehydrogenation of C-3 to form the beta-ketone aldehyde, which is followed by the generation of the nucleophilic C-2 that is required for the intramolecular aldol condensation between C-2 and C-7, itself followed by dehydration and aromatization which leads to salicylaldehyde 5-deoxyaurocitrin. While the dehydrogenation of virensol D is definitely catalyzed by virD, the aldol condensation and dehydration may be uncatalyzed or assisted by virD. The short chain dehydrogenase virG then converts salicylaldehyde 5-deoxyaurocitrin into virensol B which is further hydroxylated by the cytochrome P450 monooxygenase virE to yield the hydroquinone virensol A. VirI then may oxidize virensol A to form the quinone, while virH performs the epoxidation. Finally, the two remaining short-chain dehydrogenases, virK and virL, are probably responsible for reducing the ketones to the corresponding alcohols to furnish the epoxycyclohexanol structure in trichoxide. This Hypocrea virens (strain Gv29-8 / FGSC 10586) (Gliocladium virens) protein is Short chain dehydrogenase virK.